Reading from the N-terminus, the 124-residue chain is Putative iron-sulfur cluster insertion protein ErpA 2 (124 aa).

Cys-52, Cys-116, and Cys-118 together coordinate iron-sulfur cluster.

This sequence belongs to the HesB/IscA family. As to quaternary structure, homodimer. It depends on iron-sulfur cluster as a cofactor.

Its function is as follows. Required for insertion of 4Fe-4S clusters. In Burkholderia vietnamiensis (strain G4 / LMG 22486) (Burkholderia cepacia (strain R1808)), this protein is Putative iron-sulfur cluster insertion protein ErpA 2.